We begin with the raw amino-acid sequence, 143 residues long: Transcriptional regulator MraZ (143 aa).

2 consecutive SpoVT-AbrB domains span residues threonine 5–glutamate 47 and alanine 76–alanine 119.

Belongs to the MraZ family. As to quaternary structure, forms oligomers.

Its subcellular location is the cytoplasm. It is found in the nucleoid. The protein is Transcriptional regulator MraZ of Corynebacterium diphtheriae (strain ATCC 700971 / NCTC 13129 / Biotype gravis).